The following is a 313-amino-acid chain: MTQWYPASPALWQGRDDSIEAPDARRLFQTVTRSETFSPENWQQKIALMGFACDEGVKRNAGRPGAAGGPDALRKALANMASHQGHERLVDLGNWVAPTPDLEGAQQALRNAVSRCLRAGMRTLVLGGGHETAFGHGAGVLDAFAQESVGIINLDAHLDLRQTDRATSGTPFRQLAQLCDAQSRAFHYACFGVSRAANTQALWREAQWRNVTVVEDLDCHDALAQMTQFIDKVDKIYLTIDLDVLPVWEMPAVSAPAALGVPLIQVLRLIEPVCRSGKLQAADLVEFNPRFDEDGAAARVAARLGWQIAHWWR.

Mn(2+)-binding residues include His-130, Asp-155, His-157, Asp-159, Asp-241, and Asp-243.

The protein belongs to the arginase family. Requires Mn(2+) as cofactor.

It catalyses the reaction N-formimidoyl-L-glutamate + H2O = formamide + L-glutamate. It functions in the pathway amino-acid degradation; L-histidine degradation into L-glutamate; L-glutamate from N-formimidoyl-L-glutamate (hydrolase route): step 1/1. Functionally, catalyzes the conversion of N-formimidoyl-L-glutamate to L-glutamate and formamide. The chain is Formimidoylglutamase from Salmonella newport (strain SL254).